The primary structure comprises 610 residues: MSSSTGPAPASASPVQANRGNSPNILPLLYTSQLGMDSQTICIPSPYVEACQDYSPPHGGEISHGALTLYSPVSSPVLGYTHPPVSESLVPLNSAIFWPPHPTHSTPSLHCPSPLAYRETHAHTTWEDAKTHINQSSSVLTHAKLLGQQLDGDDGLNPSPGILGKGDTHFCAVCHDYASGYHYGVWSCEGCKAFFKRSIQGHNDYICPATNQCTIDKSRRKSCQACRLRKCYEVGMMKCGVRRERCSYRGGRHRRNPPIRDSSGGAIGVRGHSQPHLEFPLSPTHPLFPLGDRAEGCGQNLSPEQLVNCILEAEPPQIYLREPIKKPYTEASMMMSLTNLADKELVLMISWAKKIPGFVELTLSDQVHLLECCWLDILMLGLMWRSVDHPGKLIFSPDLKLNRDEGTCVEGIMEIFDMLLATTSRFRELKLQREEYVCLKAMILLNSSNCSRLPQTPEDVESRGKVLRLLDSVTDALVWTISRTGLSSHQQSIRLAHLLMLLSHIRHLSNKGIEHLSTMKRKNVVLLYDLLLEMLDANTSQSSRMLAAHTKASLRMDTQQTTEILHTSKQQPALKESNQDTRHSPQAEGTVDKTLHRVDKTLHRVDVDTD.

The tract at residues 1 to 170 (MSSSTGPAPA…GILGKGDTHF (170 aa)) is modulating. NR C4-type zinc fingers lie at residues 171–191 (CAVCHDYASGYHYGVWSCEGC) and 207–231 (CPATNQCTIDKSRRKSCQACRLRKC). The nuclear receptor DNA-binding region spans 171–236 (CAVCHDYASG…RLRKCYEVGM (66 aa)). The NR LBD domain maps to 302–538 (SPEQLVNCIL…DLLLEMLDAN (237 aa)). The tract at residues 566 to 596 (HTSKQQPALKESNQDTRHSPQAEGTVDKTLH) is disordered. Over residues 577 to 596 (SNQDTRHSPQAEGTVDKTLH) the composition is skewed to basic and acidic residues.

It belongs to the nuclear hormone receptor family. NR3 subfamily. As to quaternary structure, binds DNA as a homodimer. Can form a heterodimer with ER-alpha. Predominantly expressed in pituitary, telencephalon and hypothalamus as well as in the liver.

Its subcellular location is the nucleus. In terms of biological role, binds estrogens with an affinity similar to that of ER-alpha, and activates expression of reporter genes containing estrogen response elements (ERE) in an estrogen-dependent manner. This chain is Estrogen receptor beta-2 (esr2b), found in Carassius auratus (Goldfish).